The sequence spans 1158 residues: ATP-dependent helicase/deoxyribonuclease subunit B (1158 aa).

The protein belongs to the helicase family. AddB/RexB type 2 subfamily. In terms of assembly, heterodimer of AddA and RexB. It depends on Mg(2+) as a cofactor.

The heterodimer acts as both an ATP-dependent DNA helicase and an ATP-dependent, dual-direction single-stranded exonuclease. Recognizes the chi site generating a DNA molecule suitable for the initiation of homologous recombination. This subunit has 5' -&gt; 3' nuclease activity but not helicase activity. This Lactobacillus gasseri (strain ATCC 33323 / DSM 20243 / BCRC 14619 / CIP 102991 / JCM 1131 / KCTC 3163 / NCIMB 11718 / NCTC 13722 / AM63) protein is ATP-dependent helicase/deoxyribonuclease subunit B.